A 78-amino-acid polypeptide reads, in one-letter code: Acyl carrier protein (78 aa).

A Carrier domain is found at 2-77 (SDIAERVKKI…DAVKFIEKAQ (76 aa)). Ser-37 is modified (O-(pantetheine 4'-phosphoryl)serine).

Belongs to the acyl carrier protein (ACP) family. Post-translationally, 4'-phosphopantetheine is transferred from CoA to a specific serine of apo-ACP by AcpS. This modification is essential for activity because fatty acids are bound in thioester linkage to the sulfhydryl of the prosthetic group.

It is found in the cytoplasm. Its pathway is lipid metabolism; fatty acid biosynthesis. Functionally, carrier of the growing fatty acid chain in fatty acid biosynthesis. This chain is Acyl carrier protein, found in Sinorhizobium fredii (strain NBRC 101917 / NGR234).